The following is an 899-amino-acid chain: Plasma membrane ATPase (899 aa).

The segment at 1 to 72 is disordered; sequence MSAATEPTKE…TDPSYGLTSD (72 aa). The Cytoplasmic portion of the chain corresponds to 1–96; it reads MSAATEPTKE…SEETENLFVK (96 aa). The segment covering 17–29 has biased composition (acidic residues); the sequence is DSDDEDEDIDQLI. Residues 97–117 traverse the membrane as a helical segment; that stretch reads FLMFFIGPIQFVMEAAAILAA. At 118–121 the chain is on the extracellular side; the sequence is GLED. Residues 122-141 traverse the membrane as a helical segment; that stretch reads WVDFGVICGLLFLNAAVGFI. The Cytoplasmic segment spans residues 142–272; the sequence is QEYQAGSIVD…GSGHFTEVLN (131 aa). The helical transmembrane segment at 273 to 294 threads the bilayer; sequence GIGTILLILVIVTLLLVWVASF. Residues 295 to 305 lie on the Extracellular side of the membrane; it reads YRTNKIVRILR. The helical transmembrane segment at 306 to 328 threads the bilayer; the sequence is YTLAITIVGVPVGLPAVVTTTMA. Over 329–700 the chain is Cytoplasmic; that stretch reads VGAAYLAKKQ…IAILNRSLNI (372 aa). The active-site 4-aspartylphosphate intermediate is aspartate 359. Residues aspartate 615 and aspartate 619 each contribute to the Mg(2+) site. The helical transmembrane segment at 701–719 threads the bilayer; it reads DLVVFIAIFADVATLAIAY. Residues 720–735 are Extracellular-facing; that stretch reads DNAPYSPKPVKWNLRR. Residues 736–755 traverse the membrane as a helical segment; the sequence is LWGMSVILGIILAIGTWITL. Residues 756–805 are Cytoplasmic-facing; the sequence is TTMFVPKGGIIQNFGSIDGVLFLQISLTENWLIFITRAAGPFWSSIPSWQ. Residues 806-826 form a helical membrane-spanning segment; it reads LSGAVLIVDIIATMFCLFGWW. Topologically, residues 827-838 are extracellular; sequence SQNWNDIVTVVR. Residues 839–855 traverse the membrane as a helical segment; that stretch reads VWIFSFGVFCVMGGAYY. The Cytoplasmic portion of the chain corresponds to 856–899; it reads MMSESEAFDRFMNGKSRRDKPSGRSVEDFLMAMQRVSTQHEKEN.

Belongs to the cation transport ATPase (P-type) (TC 3.A.3) family. Type IIIA subfamily.

It localises to the cell membrane. It carries out the reaction ATP + H2O + H(+)(in) = ADP + phosphate + 2 H(+)(out). Its activity is regulated as follows. Activated by high pH or also by potassium ions when the medium pH is low. Functionally, the plasma membrane ATPase of plants and fungi is a hydrogen ion pump. The proton gradient it generates drives the active transport of nutrients by H(+)-symport. The resulting external acidification and/or internal alkinization may mediate growth responses. The chain is Plasma membrane ATPase (PMA1) from Kluyveromyces lactis (strain ATCC 8585 / CBS 2359 / DSM 70799 / NBRC 1267 / NRRL Y-1140 / WM37) (Yeast).